We begin with the raw amino-acid sequence, 600 residues long: MVNNMTDLTAQEPAWQTRDHLDDPVIGELRNRFGPDAFTVQATRTGVPVVWIKREQLLEVGDFLKKLPKPYVMLFDLHGMDERLRTHREGLPAADFSVFYHLISIDRNRDIMLKVALAENDLHVPTFTKLFPNANWYERETWDLFGITFDGHPNLRRIMMPQTWKGHPLRKDYPARATEFSPFELTKAKQDLEMEALTFKPEEWGMKRGTENEDFMFLNLGPNHPSAHGAFRIVLQLDGEEIVDCVPDIGYHHRGAEKMGERQSWHSYIPYTDRIEYLGGCVNEMPYVLAVEKLAGITVPDRVNVIRVMLSELFRINSHLLYISTFIQDVGAMTPVFFAFTDRQKIYDLVEAITGFRMHPAWFRIGGVAHDLPRGWDRLLREFLDWMPKRLASYEKAALQNTILKGRSQGVAAYGAKEALEWGTTGAGLRATGIDFDVRKARPYSGYENFDFEIPVGGGVSDCYTRVMLKVEELRQSLRILEQCLNNMPEGPFKADHPLTTPPPKERTLQHIETLITHFLQVSWGPVMPANESFQMIEATKGINSYYLTSDGSTISYRTRIRTPSYAHLQQIPAAIRGSLVSDLIVYLGSIDFVMSDVDR.

Residues 1–190 form an NADH dehydrogenase I subunit C region; the sequence is MVNNMTDLTA…SPFELTKAKQ (190 aa). An NADH dehydrogenase I subunit D region spans residues 214–600; that stretch reads DFMFLNLGPN…IDFVMSDVDR (387 aa).

In the N-terminal section; belongs to the complex I 30 kDa subunit family. The protein in the C-terminal section; belongs to the complex I 49 kDa subunit family. NDH-1 is composed of 13 different subunits. Subunits NuoB, CD, E, F, and G constitute the peripheral sector of the complex.

The protein resides in the cell inner membrane. The enzyme catalyses a quinone + NADH + 5 H(+)(in) = a quinol + NAD(+) + 4 H(+)(out). Functionally, NDH-1 shuttles electrons from NADH, via FMN and iron-sulfur (Fe-S) centers, to quinones in the respiratory chain. The immediate electron acceptor for the enzyme in this species is believed to be ubiquinone. Couples the redox reaction to proton translocation (for every two electrons transferred, four hydrogen ions are translocated across the cytoplasmic membrane), and thus conserves the redox energy in a proton gradient. This Shigella boydii serotype 18 (strain CDC 3083-94 / BS512) protein is NADH-quinone oxidoreductase subunit C/D.